A 349-amino-acid chain; its full sequence is 1-acylglycerol-3-phosphate O-acyltransferase ABHD5 (349 aa).

The residue at position 2 (A2) is an N-acetylalanine. The AB hydrolase-1 domain maps to P77–P185. The short motif at H327 to D332 is the HXXXXD motif element.

It belongs to the peptidase S33 family. ABHD4/ABHD5 subfamily. As to quaternary structure, interacts with ADRP, PLIN and PNPLA2. Interacts with PLIN5; promotes interaction with PNPLA2.

The protein resides in the cytoplasm. The protein localises to the lipid droplet. It carries out the reaction a 1-acyl-sn-glycero-3-phosphate + an acyl-CoA = a 1,2-diacyl-sn-glycero-3-phosphate + CoA. The enzyme catalyses 1-(9Z-octadecenoyl)-sn-glycero-3-phosphate + (9Z)-octadecenoyl-CoA = 1,2-di-(9Z-octadecenoyl)-sn-glycero-3-phosphate + CoA. The catalysed reaction is 1-(9Z-octadecenoyl)-sn-glycero-3-phosphate + hexadecanoyl-CoA = 1-(9Z)-octadecenoyl-2-hexadecanoyl-sn-glycero-3-phosphate + CoA. It catalyses the reaction 1-(9Z-octadecenoyl)-sn-glycero-3-phosphate + octadecanoyl-CoA = 1-(9Z-octadecenoyl)-2-octadecanoyl-sn-glycero-3-phosphate + CoA. It carries out the reaction 1-(9Z-octadecenoyl)-sn-glycero-3-phosphate + (5Z,8Z,11Z,14Z)-eicosatetraenoyl-CoA = 1-(9Z)-octadecenoyl-2-(5Z,8Z,11Z,14Z)-eicosatetraenoyl-sn-glycero-3-phosphate + CoA. The enzyme catalyses eicosanoyl-CoA + 1-(9Z-octadecenoyl)-sn-glycero-3-phosphate = 1-(9Z)-octadecenoyl-2-eicosanoyl-sn-glycero-3-phosphate + CoA. The catalysed reaction is 1-hexadecanoyl-sn-glycero-3-phosphate + (9Z)-octadecenoyl-CoA = 1-hexadecanoyl-2-(9Z-octadecenoyl)-sn-glycero-3-phosphate + CoA. It catalyses the reaction 1-octadecanoyl-sn-glycero-3-phosphate + (9Z)-octadecenoyl-CoA = 1-octadecanoyl-2-(9Z-octadecenoyl)-sn-glycero-3-phosphate + CoA. It carries out the reaction 1-(5Z,8Z,11Z,14Z-eicosatetraenoyl)-sn-glycero-3-phosphate + (9Z)-octadecenoyl-CoA = 1-(5Z,8Z,11Z,14Z)-eicosatetraenoyl-2-(9Z)-octadecenoyl-sn-glycero-3-phosphate + CoA. With respect to regulation, acyltransferase activity is inhibited by detergents such as Triton X-100 and 3-[(3-cholamidopropyl)dimethylammonio]-1-propanesulfonate (CHAPS). Acyltransferase activity is inhibited by the presence of magnesium and calcium. Coenzyme A-dependent lysophosphatidic acid acyltransferase that catalyzes the transfer of an acyl group on a lysophosphatidic acid. Functions preferentially with 1-oleoyl-lysophosphatidic acid followed by 1-palmitoyl-lysophosphatidic acid, 1-stearoyl-lysophosphatidic acid and 1-arachidonoyl-lysophosphatidic acid as lipid acceptor. Functions preferentially with arachidonoyl-CoA followed by oleoyl-CoA as acyl group donors. Functions in phosphatidic acid biosynthesis. May regulate the cellular storage of triacylglycerol through activation of the phospholipase PNPLA2. Involved in keratinocyte differentiation. Regulates lipid droplet fusion. This chain is 1-acylglycerol-3-phosphate O-acyltransferase ABHD5, found in Sus scrofa (Pig).